The chain runs to 119 residues: MNLDQYLPVLLFILVGIGVGVVPLVLGYVLGPNRPDAAKNSPYECGFEAFEDARMKFDVRYYLVAILFILFDLEIAFLFPWAVALHEVGMTGFVAVIVFLAILVVGFAYEWKKGALDWE.

3 helical membrane passes run 9 to 29 (VLLF…LGYV), 63 to 83 (LVAI…PWAV), and 88 to 108 (VGMT…VGFA).

This sequence belongs to the complex I subunit 3 family. In terms of assembly, NDH-1 is composed of 14 different subunits. Subunits NuoA, H, J, K, L, M, N constitute the membrane sector of the complex.

The protein resides in the cell inner membrane. It catalyses the reaction a quinone + NADH + 5 H(+)(in) = a quinol + NAD(+) + 4 H(+)(out). Its function is as follows. NDH-1 shuttles electrons from NADH, via FMN and iron-sulfur (Fe-S) centers, to quinones in the respiratory chain. The immediate electron acceptor for the enzyme in this species is believed to be ubiquinone. Couples the redox reaction to proton translocation (for every two electrons transferred, four hydrogen ions are translocated across the cytoplasmic membrane), and thus conserves the redox energy in a proton gradient. The polypeptide is NADH-quinone oxidoreductase subunit A (Paracidovorax citrulli (strain AAC00-1) (Acidovorax citrulli)).